The following is a 509-amino-acid chain: Heat shock 70 kDa protein 14 (509 aa).

It belongs to the heat shock protein 70 family. Component of ribosome-associated complex (RAC), a heterodimer composed of Hsp70/DnaK-type chaperone HSPA14 and Hsp40/DnaJ-type chaperone DNAJC2.

It is found in the cytoplasm. It localises to the cytosol. Its function is as follows. Component of the ribosome-associated complex (RAC), a complex involved in folding or maintaining nascent polypeptides in a folding-competent state. In the RAC complex, binds to the nascent polypeptide chain, while DNAJC2 stimulates its ATPase activity. The chain is Heat shock 70 kDa protein 14 (Hspa14) from Mus musculus (Mouse).